A 181-amino-acid chain; its full sequence is MENDDITVAEMKPKKRAGRRIFKETRHPIYRGVRRRDGDKWVCEVREPIHQRRVWLGTYPTADMAARAHDVAVLALRGRSACLNFSDSAWRLPVPASTDPDTIRRTAAEAAEMFRPPEFSTGITVLPSASEFDTSDEGVAGMMMRLAEEPLMSPPRSYIDMNTSVYVDEEMCYEDLSLWSY.

The Nuclear localization signal motif lies at 14-26 (KKRAGRRIFKETR). Residues 29 to 86 (IYRGVRRRDGDKWVCEVREPIHQRRVWLGTYPTADMAARAHDVAVLALRGRSACLNFS) constitute a DNA-binding region (AP2/ERF).

The protein belongs to the AP2/ERF transcription factor family. ERF subfamily.

The protein localises to the nucleus. Transcriptional activator that binds specifically to the DNA sequence 5'-[AG]CCGAC-3'. Binding to the C-repeat/DRE element mediates cold or dehydration-inducible transcription. CBF/DREB1 factors play a key role in freezing tolerance and cold acclimation. This Arabidopsis thaliana (Mouse-ear cress) protein is Dehydration-responsive element-binding protein 1E (DREB1E).